A 446-amino-acid chain; its full sequence is Tubulin beta-6 chain (446 aa).

Residues 1 to 4 carry the MREI motif motif; it reads MREI. The GTP site is built by Q11, E69, S138, G142, T143, and G144. E69 is a Mg(2+) binding site. Residue S172 is modified to Phosphoserine; by CDK1. GTP contacts are provided by N204 and N226. At E438 the chain carries 5-glutamyl polyglutamate.

Belongs to the tubulin family. Dimer of alpha and beta chains. A typical microtubule is a hollow water-filled tube with an outer diameter of 25 nm and an inner diameter of 15 nM. Alpha-beta heterodimers associate head-to-tail to form protofilaments running lengthwise along the microtubule wall with the beta-tubulin subunit facing the microtubule plus end conferring a structural polarity. Microtubules usually have 13 protofilaments but different protofilament numbers can be found in some organisms and specialized cells. The cofactor is Mg(2+). Some glutamate residues at the C-terminus are polyglutamylated, resulting in polyglutamate chains on the gamma-carboxyl group. Polyglutamylation plays a key role in microtubule severing by spastin (SPAST). SPAST preferentially recognizes and acts on microtubules decorated with short polyglutamate tails: severing activity by SPAST increases as the number of glutamates per tubulin rises from one to eight, but decreases beyond this glutamylation threshold. Glutamylation is also involved in cilia motility. Post-translationally, some glutamate residues at the C-terminus are monoglycylated but not polyglycylated due to the absence of functional TTLL10 in human. Monoglycylation is mainly limited to tubulin incorporated into cilia and flagella axonemes, which is required for their stability and maintenance. Flagella glycylation controls sperm motility. Both polyglutamylation and monoglycylation can coexist on the same protein on adjacent residues, and lowering glycylation levels increases polyglutamylation, and reciprocally. In terms of processing, phosphorylated on Ser-172 by CDK1 during the cell cycle, from metaphase to telophase, but not in interphase. This phosphorylation inhibits tubulin incorporation into microtubules. As to expression, ubiquitous. Maximal expression in breast and lung, where it represents around 10% of all beta-tubulins. Largely decreased expression in most cancerous tissues.

It localises to the cytoplasm. The protein localises to the cytoskeleton. Functionally, tubulin is the major constituent of microtubules, a cylinder consisting of laterally associated linear protofilaments composed of alpha- and beta-tubulin heterodimers. Microtubules grow by the addition of GTP-tubulin dimers to the microtubule end, where a stabilizing cap forms. Below the cap, tubulin dimers are in GDP-bound state, owing to GTPase activity of alpha-tubulin. The chain is Tubulin beta-6 chain (TUBB6) from Homo sapiens (Human).